Consider the following 340-residue polypeptide: tRNA N6-adenosine threonylcarbamoyltransferase (340 aa).

Fe cation-binding residues include histidine 111 and histidine 115. Residues valine 133–glycine 137, aspartate 166, glycine 179, aspartate 183, and asparagine 272 contribute to the substrate site. Aspartate 300 is a binding site for Fe cation.

Belongs to the KAE1 / TsaD family. The cofactor is Fe(2+).

Its subcellular location is the cytoplasm. It catalyses the reaction L-threonylcarbamoyladenylate + adenosine(37) in tRNA = N(6)-L-threonylcarbamoyladenosine(37) in tRNA + AMP + H(+). Required for the formation of a threonylcarbamoyl group on adenosine at position 37 (t(6)A37) in tRNAs that read codons beginning with adenine. Is involved in the transfer of the threonylcarbamoyl moiety of threonylcarbamoyl-AMP (TC-AMP) to the N6 group of A37, together with TsaE and TsaB. TsaD likely plays a direct catalytic role in this reaction. This is tRNA N6-adenosine threonylcarbamoyltransferase from Geobacter sulfurreducens (strain ATCC 51573 / DSM 12127 / PCA).